The following is a 511-amino-acid chain: UDP-N-acetylmuramoyl-L-alanyl-D-glutamate--2,6-diaminopimelate ligase (511 aa).

Residue S33 coordinates UDP-N-acetyl-alpha-D-muramoyl-L-alanyl-D-glutamate. 118-124 (GTNGKTT) lines the ATP pocket. UDP-N-acetyl-alpha-D-muramoyl-L-alanyl-D-glutamate is bound by residues 160–161 (TT), S187, Q193, and R195. K227 is modified (N6-carboxylysine). Residues R403, 427-430 (DNPR), G478, and E482 contribute to the meso-2,6-diaminopimelate site. A Meso-diaminopimelate recognition motif motif is present at residues 427 to 430 (DNPR).

It belongs to the MurCDEF family. MurE subfamily. Mg(2+) serves as cofactor. Post-translationally, carboxylation is probably crucial for Mg(2+) binding and, consequently, for the gamma-phosphate positioning of ATP.

The protein localises to the cytoplasm. The catalysed reaction is UDP-N-acetyl-alpha-D-muramoyl-L-alanyl-D-glutamate + meso-2,6-diaminopimelate + ATP = UDP-N-acetyl-alpha-D-muramoyl-L-alanyl-gamma-D-glutamyl-meso-2,6-diaminopimelate + ADP + phosphate + H(+). The protein operates within cell wall biogenesis; peptidoglycan biosynthesis. In terms of biological role, catalyzes the addition of meso-diaminopimelic acid to the nucleotide precursor UDP-N-acetylmuramoyl-L-alanyl-D-glutamate (UMAG) in the biosynthesis of bacterial cell-wall peptidoglycan. This Prochlorococcus marinus subsp. pastoris (strain CCMP1986 / NIES-2087 / MED4) protein is UDP-N-acetylmuramoyl-L-alanyl-D-glutamate--2,6-diaminopimelate ligase.